We begin with the raw amino-acid sequence, 116 residues long: Putative pterin-4-alpha-carbinolamine dehydratase (116 aa).

This sequence belongs to the pterin-4-alpha-carbinolamine dehydratase family.

The catalysed reaction is (4aS,6R)-4a-hydroxy-L-erythro-5,6,7,8-tetrahydrobiopterin = (6R)-L-erythro-6,7-dihydrobiopterin + H2O. In Xylella fastidiosa (strain 9a5c), this protein is Putative pterin-4-alpha-carbinolamine dehydratase.